The sequence spans 179 residues: Large ribosomal subunit protein uL6 (179 aa).

Belongs to the universal ribosomal protein uL6 family. Part of the 50S ribosomal subunit.

In terms of biological role, this protein binds to the 23S rRNA, and is important in its secondary structure. It is located near the subunit interface in the base of the L7/L12 stalk, and near the tRNA binding site of the peptidyltransferase center. The sequence is that of Large ribosomal subunit protein uL6 from Buchnera aphidicola subsp. Baizongia pistaciae (strain Bp).